The following is a 541-amino-acid chain: Transcription factor STP2 (541 aa).

The tract at residues 13-32 (VLTRIYDYLKALVQQVIVPN) is i. The segment at 35 to 58 (DDKSSKSTPFEKLEPAKQNHPQKD) is disordered. Positions 73-105 (LFPKQNNKQLSLTSKSSVVPCALNLDNLETPFS) are II. The C2H2-type 1 zinc-finger motif lies at 204 to 226 (YICHYCDARFRIRGYLTRHIKKH). The segment at 232-267 (YHCPFFDNSISQELRCHTSGGFSRRDTYKTHLKSRH) adopts a C2H2-type 2; atypical zinc-finger fold. The C2H2-type 3; atypical zinc finger occupies 284-309 (GVCTQCGEHFSTSESWVENHIEAGSC). A compositionally biased stretch (low complexity) spans 452–462 (SSASSALSPLS). Residues 452 to 497 (SSASSALSPLSGDPITTTETNKSYPLDSEQSLLEPDKTEEDAINQS) form a disordered region. The segment covering 465-482 (PITTTETNKSYPLDSEQS) has biased composition (polar residues).

In terms of assembly, interacts (via Region II) with SSY5; protease component of the SPS-sensor. Post-translationally, activated by the amino acid-induced proteolytic removal of an N-terminal inhibitory domain by serine protease SSY5, an intrinsic component of the SPS-sensor. Processing requires at least 2 components of the SCF(GRR1) ubiquitin ligase complex, namely the F-box protein GRR1 and the E2 enzyme CDC34, but does not depend on the proteasome. Processing is negatively regulated by the protein phosphatase 2A regulatory subunit RTS1.

The protein resides in the cell membrane. The protein localises to the nucleus. Functionally, transcription factor involved in the regulation of gene expression in response to extracellular amino acid levels. Synthesized as latent cytoplasmic precursor, which, upon a signal initiated by the plasma membrane SPS (SSY1-PTR3-SSY5) amino acid sensor system, becomes proteolytically activated and relocates to the nucleus, where it induces the expression of SPS-sensor-regulated genes, including the amino-acid permeases BAP2 and BAP3. Binding to promoters is facilitated by DAL81. Involved in the repression of genes subject to nitrogen catabolite repression and genes involved in stress response. Negatively regulated by inner nuclear membrane proteins ASI1, ASI2 and ASI3, which prevent unprocessed precursor forms that escape cytoplasmic anchoring from inducing SPS-sensor-regulated genes. The protein is Transcription factor STP2 (STP2) of Saccharomyces cerevisiae (strain ATCC 204508 / S288c) (Baker's yeast).